The sequence spans 449 residues: MADPKDISPCKNEDLFLKCRSTLITGVLLPDKTRSDIWYDETGTIRTCGPDIARNHRNEADIILDGSGFLAMPGLINTHTHAAMTLLRGYADDMHLQQWLSEKIWPLEAHLTGEHVYWGTKLACLEMIRSGTIAFNDMYFYMKDAARAVQESGIRAVLSHGIITFGDEAKMEAELKATEDLVHHVRSLNTSLITSAIAPHAPYTVPPQHLEVCADYSQKEKIIIHTHLAETKQEVDDCQKSYGMTPAALLDKTGCLTERTVAAHGCWLSEDDCRLLAERRVSVAHNPVSNMKLATGRAMPYHWLKDQGVNVCLGTDGCSSNNNLDMLEEMKTAALCQKFFWNSDTLLPAAEALSMGTSWGAKALGYQGGVIQEGMPADIVLISLSHPSMVPLHNPVSNIAYSAEGSVVDTVICQGKILMYNRYIPDEEKIIAGARESADDLLNRAGIMA.

His-79 and His-81 together coordinate Zn(2+). Residues Glu-108 and His-200 each contribute to the substrate site. His-227 lines the Zn(2+) pocket. Substrate is bound by residues Glu-230 and Asp-316. Zn(2+) is bound at residue Asp-316.

Belongs to the metallo-dependent hydrolases superfamily. MTA/SAH deaminase family. In terms of assembly, homotetramer. It depends on Zn(2+) as a cofactor.

It carries out the reaction 5'-deoxyadenosine + H2O + H(+) = 5'-deoxyinosine + NH4(+). It catalyses the reaction S-adenosyl-L-homocysteine + H2O + H(+) = S-inosyl-L-homocysteine + NH4(+). The enzyme catalyses S-methyl-5'-thioadenosine + H2O + H(+) = S-methyl-5'-thioinosine + NH4(+). The catalysed reaction is adenosine + H2O + H(+) = inosine + NH4(+). It participates in amino-acid biosynthesis; S-adenosyl-L-methionine biosynthesis. Functionally, catalyzes the deamination of three SAM-derived enzymatic products, namely 5'-deoxyadenosine, S-adenosyl-L-homocysteine, and 5'-methylthioadenosine, to produce the inosine analogs. Can also deaminate adenosine. The preferred substrate for this enzyme is 5'-deoxyadenosine, but all these substrates are efficiently deaminated. Likely functions in a S-adenosyl-L-methionine (SAM) recycling pathway from S-adenosyl-L-homocysteine (SAH) produced from SAM-dependent methylation reactions. May also be involved in the recycling of 5'-deoxyadenosine, whereupon the 5'-deoxyribose moiety of 5'-deoxyinosine is further metabolized to deoxyhexoses used for the biosynthesis of aromatic amino acids in methanogens. The polypeptide is 5'-deoxyadenosine deaminase (Methanospirillum hungatei JF-1 (strain ATCC 27890 / DSM 864 / NBRC 100397 / JF-1)).